The following is a 701-amino-acid chain: Elongation factor G (701 aa).

Residues 10-290 (AKVRNIGIMA…AVVDYLPSPL (281 aa)) enclose the tr-type G domain. GTP is bound by residues 19–26 (AHIDAGKT), 83–87 (DTPGH), and 137–140 (NKMD).

Belongs to the TRAFAC class translation factor GTPase superfamily. Classic translation factor GTPase family. EF-G/EF-2 subfamily.

Its subcellular location is the cytoplasm. Its function is as follows. Catalyzes the GTP-dependent ribosomal translocation step during translation elongation. During this step, the ribosome changes from the pre-translocational (PRE) to the post-translocational (POST) state as the newly formed A-site-bound peptidyl-tRNA and P-site-bound deacylated tRNA move to the P and E sites, respectively. Catalyzes the coordinated movement of the two tRNA molecules, the mRNA and conformational changes in the ribosome. This is Elongation factor G from Tropheryma whipplei (strain TW08/27) (Whipple's bacillus).